A 202-amino-acid chain; its full sequence is Secreted RxLR effector protein 93 (202 aa).

An N-terminal signal peptide occupies residues 1–16 (MRFYLTKLFAAAGALA). The disordered stretch occupies residues 29-58 (TPVSPLSRSSDHHQSDDSTQRRLRTLNGAD). The span at 37–48 (SSDHHQSDDSTQ) shows a compositional bias: basic and acidic residues. The short motif at 49-61 (RRLRTLNGADEER) is the RxLR-dEER element.

This sequence belongs to the RxLR effector family.

The protein localises to the secreted. The protein resides in the host nucleus. Functionally, secreted effector that completely suppresses the host cell death induced by cell death-inducing proteins. The chain is Secreted RxLR effector protein 93 from Plasmopara viticola (Downy mildew of grapevine).